The following is a 212-amino-acid chain: Thymidylate kinase (212 aa).

10–17 (GPDGAGKT) contacts ATP.

It belongs to the thymidylate kinase family.

The enzyme catalyses dTMP + ATP = dTDP + ADP. Phosphorylation of dTMP to form dTDP in both de novo and salvage pathways of dTTP synthesis. This Lactobacillus delbrueckii subsp. bulgaricus (strain ATCC 11842 / DSM 20081 / BCRC 10696 / JCM 1002 / NBRC 13953 / NCIMB 11778 / NCTC 12712 / WDCM 00102 / Lb 14) protein is Thymidylate kinase.